A 903-amino-acid chain; its full sequence is Protein translocase subunit SecA (903 aa).

ATP is bound by residues Gln87, 105-109 (GEGKT), and Asp494. The tract at residues 861-883 (SGSQGAAPRQPVRAEGKKVGRND) is disordered. Over residues 872 to 881 (VRAEGKKVGR) the composition is skewed to basic and acidic residues. The Zn(2+) site is built by Cys885, Cys887, Cys896, and Cys897.

Belongs to the SecA family. In terms of assembly, monomer and homodimer. Part of the essential Sec protein translocation apparatus which comprises SecA, SecYEG and auxiliary proteins SecDF. Other proteins may also be involved. The cofactor is Zn(2+).

The protein resides in the cell membrane. It is found in the cytoplasm. The catalysed reaction is ATP + H2O + cellular proteinSide 1 = ADP + phosphate + cellular proteinSide 2.. Its function is as follows. Part of the Sec protein translocase complex. Interacts with the SecYEG preprotein conducting channel. Has a central role in coupling the hydrolysis of ATP to the transfer of proteins into and across the cell membrane, serving as an ATP-driven molecular motor driving the stepwise translocation of polypeptide chains across the membrane. The polypeptide is Protein translocase subunit SecA (Symbiobacterium thermophilum (strain DSM 24528 / JCM 14929 / IAM 14863 / T)).